Reading from the N-terminus, the 396-residue chain is Subtilisin-like protease 5 (396 aa).

The first 20 residues, 1–20, serve as a signal peptide directing secretion; sequence MTGFFTILSFSLAALSVTNA. The propeptide occupies 21-116; that stretch reads AQILSVPKGA…VEPDAIISQH (96 aa). The region spanning 37–113 is the Inhibitor I9 domain; sequence YIVVMKDDTS…VAFVEPDAII (77 aa). A glycan (N-linked (GlcNAc...) asparagine) is linked at N63. Positions 125-396 constitute a Peptidase S8 domain; it reads PWGLSRLSNR…SRLLYNGSGR (272 aa). Residues D156 and H187 each act as charge relay system in the active site. N-linked (GlcNAc...) asparagine glycosylation is found at N230 and N248. The active-site Charge relay system is the S342. The span at 376–389 shows a compositional bias: polar residues; sequence PTIRNPGPDTTSRL. The interval 376–396 is disordered; it reads PTIRNPGPDTTSRLLYNGSGR. Residue N392 is glycosylated (N-linked (GlcNAc...) asparagine).

It belongs to the peptidase S8 family.

It localises to the secreted. Secreted subtilisin-like serine protease with keratinolytic activity that contributes to pathogenicity. The polypeptide is Subtilisin-like protease 5 (SUB5) (Trichophyton verrucosum (Cattle ringworm fungus)).